A 256-amino-acid polypeptide reads, in one-letter code: Floral homeotic protein APETALA 1-2 (256 aa).

In terms of domain architecture, MADS-box spans 1–61 (MGRGRVQLKR…GKLFEYSTDS (61 aa)). A K-box domain is found at 88-178 (NTNWSMEYNR…SKQIKERENV (91 aa)). The disordered stretch occupies residues 187-206 (DEQNHGHNMPPPPPPQQHQI).

Homodimer capable of binding to CArG-box sequences.

The protein resides in the nucleus. Functionally, transcription factor that promotes early floral meristem identity in synergy with LEAFY. Displays a redundant function with CAULIFLOWER in the up-regulation of LEAFY. Required subsequently for the transition of an inflorescence meristem into a floral meristem, and for the normal development of sepals and petals in flowers. Regulates positively B class homeotic proteins. This chain is Floral homeotic protein APETALA 1-2 (2AP1), found in Brassica oleracea var. italica (Broccoli).